We begin with the raw amino-acid sequence, 352 residues long: Heat-inducible transcription repressor HrcA (352 aa).

Belongs to the HrcA family.

Its function is as follows. Negative regulator of class I heat shock genes (grpE-dnaK-dnaJ and groELS operons). Prevents heat-shock induction of these operons. In Thermosynechococcus vestitus (strain NIES-2133 / IAM M-273 / BP-1), this protein is Heat-inducible transcription repressor HrcA.